Consider the following 315-residue polypeptide: MGTSEDKMPFKTTKPTSSAQEVPPTPYPDWQNSMQAYYGGGGTPNPFFPSPVGSPSPHPYMWGAQHHMMPPYGTPVPYPAMYPPGAVYAHPSMPMPPNSGPTNKEPAKDQASGKKSKGNSKKKAEGGDKALSGSGNDGASHSDESVTAGSSDENDENANQQEQGSIRKPSFGQMLADASSQSTTGEIQGSVPMKPVAPGTNLNIGMDLWSSQAGVPVKDERELKRQKRKQSNRESARRSRLRKQAECEQLQQRVESLSNENQSLRDELQRLSSECDKLKSENNSIQDELQRVLGAEAVANLEQNAAGSKDGEGTN.

Disordered stretches follow at residues 1–56 and 93–268; these read MGTS…GSPS and MPMP…RDEL. A compositionally biased stretch (pro residues) spans 46–56; the sequence is PFFPSPVGSPS. 2 stretches are compositionally biased toward polar residues: residues 133–164 and 178–187; these read GSGN…QEQG and ASSQSTTGEI. The bZIP domain occupies 222–285; it reads ELKRQKRKQS…DKLKSENNSI (64 aa). The interval 224–243 is basic motif; sequence KRQKRKQSNRESARRSRLRK. Residues 249 to 262 are compositionally biased toward polar residues; it reads QLQQRVESLSNENQ. The tract at residues 250-285 is leucine-zipper; that stretch reads LQQRVESLSNENQSLRDELQRLSSECDKLKSENNSI.

Belongs to the bZIP family. As to quaternary structure, monomer and heterodimers with BZIP16 and BZIP68. Interacts with GIP1. Post-translationally, phosphorylated by CK2. In terms of tissue distribution, found in both light and dark grown leaves.

The protein resides in the nucleus. Binds to the G-box motif (5'-CCACGTGG-3') of the rbcS-1A gene promoter. G-box and G-box-like motifs are cis-acting elements defined in promoters of certain plant genes which are regulated by such diverse stimuli as light-induction or hormone control. Binds to the G-box motif 5'-CACGTG-3' of LHCB2.4 (At3g27690) promoter. May act as transcriptional activator in light-regulated expression of LHCB2.4. Probably binds DNA as monomer. DNA-binding activity is redox-dependent. This Arabidopsis thaliana (Mouse-ear cress) protein is G-box-binding factor 1 (GBF1).